The primary structure comprises 251 residues: Methionine aminopeptidase (251 aa).

His-77 contacts substrate. 3 residues coordinate a divalent metal cation: Asp-94, Asp-105, and His-169. A substrate-binding site is contributed by His-176. The a divalent metal cation site is built by Glu-202 and Glu-233.

This sequence belongs to the peptidase M24A family. Methionine aminopeptidase type 1 subfamily. As to quaternary structure, monomer. Co(2+) is required as a cofactor. The cofactor is Zn(2+). Requires Mn(2+) as cofactor. Fe(2+) serves as cofactor.

The enzyme catalyses Release of N-terminal amino acids, preferentially methionine, from peptides and arylamides.. Functionally, removes the N-terminal methionine from nascent proteins. The N-terminal methionine is often cleaved when the second residue in the primary sequence is small and uncharged (Met-Ala-, Cys, Gly, Pro, Ser, Thr, or Val). Requires deformylation of the N(alpha)-formylated initiator methionine before it can be hydrolyzed. The protein is Methionine aminopeptidase of Mycoplasma capricolum subsp. capricolum (strain California kid / ATCC 27343 / NCTC 10154).